The following is a 160-amino-acid chain: Transcription elongation factor GreA (160 aa).

It belongs to the GreA/GreB family.

Functionally, necessary for efficient RNA polymerase transcription elongation past template-encoded arresting sites. The arresting sites in DNA have the property of trapping a certain fraction of elongating RNA polymerases that pass through, resulting in locked ternary complexes. Cleavage of the nascent transcript by cleavage factors such as GreA or GreB allows the resumption of elongation from the new 3'terminus. GreA releases sequences of 2 to 3 nucleotides. In Leuconostoc citreum (strain KM20), this protein is Transcription elongation factor GreA.